The primary structure comprises 881 residues: DNA mismatch repair protein MutS (881 aa).

605 to 612 (GPNMSGKS) serves as a coordination point for ATP.

This sequence belongs to the DNA mismatch repair MutS family.

In terms of biological role, this protein is involved in the repair of mismatches in DNA. It is possible that it carries out the mismatch recognition step. This protein has a weak ATPase activity. The polypeptide is DNA mismatch repair protein MutS (Limosilactobacillus reuteri subsp. reuteri (strain JCM 1112) (Lactobacillus reuteri)).